A 285-amino-acid chain; its full sequence is Ribosomal RNA small subunit methyltransferase A (285 aa).

Positions 27, 29, 54, 75, 100, and 120 each coordinate S-adenosyl-L-methionine.

The protein belongs to the class I-like SAM-binding methyltransferase superfamily. rRNA adenine N(6)-methyltransferase family. RsmA subfamily.

The protein localises to the cytoplasm. The catalysed reaction is adenosine(1518)/adenosine(1519) in 16S rRNA + 4 S-adenosyl-L-methionine = N(6)-dimethyladenosine(1518)/N(6)-dimethyladenosine(1519) in 16S rRNA + 4 S-adenosyl-L-homocysteine + 4 H(+). Specifically dimethylates two adjacent adenosines (A1518 and A1519) in the loop of a conserved hairpin near the 3'-end of 16S rRNA in the 30S particle. May play a critical role in biogenesis of 30S subunits. The sequence is that of Ribosomal RNA small subunit methyltransferase A from Phenylobacterium zucineum (strain HLK1).